The following is a 157-amino-acid chain: Glutamyl-tRNA(Gln) amidotransferase subunit C, mitochondrial (157 aa).

It belongs to the GatC family. Subunit of the heterotrimeric GatCAB amidotransferase (AdT) complex, composed of A, B and C subunits.

It localises to the mitochondrion. The catalysed reaction is L-glutamyl-tRNA(Gln) + L-glutamine + ATP + H2O = L-glutaminyl-tRNA(Gln) + L-glutamate + ADP + phosphate + H(+). In terms of biological role, allows the formation of correctly charged Gln-tRNA(Gln) through the transamidation of misacylated Glu-tRNA(Gln) in the mitochondria. The reaction takes place in the presence of glutamine and ATP through an activated gamma-phospho-Glu-tRNA(Gln). The polypeptide is Glutamyl-tRNA(Gln) amidotransferase subunit C, mitochondrial (Drosophila virilis (Fruit fly)).